The following is a 221-amino-acid chain: MTKIKICGITRAQDALEAALAGADALGFNFSRKSPRRIDAETARSIIAGLPPLVTPVGVFVEQSPEEINDICRHCGLLVAQLHSDDYDAEKTLQIKGVRVIRVFRPSPGFEVSQVRKFTEKTGCRSFLFDAYSPAMAGGTGQSIEAQTAGSLFDETRDFSWALLAGGLKPENVGDAVTLIRPWGVDTASGVESGPGIKDALKIRQFVEAVRKADRSLTNCC.

It belongs to the TrpF family.

The enzyme catalyses N-(5-phospho-beta-D-ribosyl)anthranilate = 1-(2-carboxyphenylamino)-1-deoxy-D-ribulose 5-phosphate. The protein operates within amino-acid biosynthesis; L-tryptophan biosynthesis; L-tryptophan from chorismate: step 3/5. In Chlorobaculum tepidum (strain ATCC 49652 / DSM 12025 / NBRC 103806 / TLS) (Chlorobium tepidum), this protein is N-(5'-phosphoribosyl)anthranilate isomerase.